The sequence spans 392 residues: ADP-ribosylhydrolase ARH1 (392 aa).

Serine 79, aspartate 80, and aspartate 81 together coordinate Mg(2+). Lysine 109 provides a ligand contact to substrate. The segment at 125 to 127 (IQT) is substrate. Substrate is bound at residue glycine 159. Substrate regions lie at residues 192 to 194 (HNN), 309 to 311 (FSG), and 315 to 316 (SS). Residues aspartate 348, aspartate 350, and serine 351 each coordinate Mg(2+).

It belongs to the ADP-ribosylglycohydrolase family. As to quaternary structure, monomer. Requires Mg(2+) as cofactor.

It carries out the reaction N(omega)-(ADP-D-ribosyl)-L-arginyl-[protein] + H2O = ADP-D-ribose + L-arginyl-[protein]. Specifically acts as an arginine mono-ADP-ribosylhydrolase by mediating the removal of mono-ADP-ribose attached to arginine residues on proteins. The protein is ADP-ribosylhydrolase ARH1 (adprh) of Dictyostelium discoideum (Social amoeba).